A 360-amino-acid chain; its full sequence is NAD(P)H-quinone oxidoreductase subunit 1, chloroplastic (360 aa).

8 helical membrane passes run 29-49 (WIPLPILVVIVGATIGVLVIV), 96-116 (IWLFTLGPALVVIPVFLAYLV), 128-148 (ISLGVFFWIAISSIAPIGLLM), 166-186 (AAQAISYEIPLSLCVLAICLL), 204-224 (ILGWNVWRQPIGFVSFLIAAL), 255-277 (GLFYVGSYVNLLLSSLFATILYL), 297-317 (IFAAFLGIGMTLLKAYLFIFL), and 333-353 (LLDLGWKFLLPISLGNLLLTA).

This sequence belongs to the complex I subunit 1 family. In terms of assembly, NDH is composed of at least 16 different subunits, 5 of which are encoded in the nucleus.

It is found in the plastid. Its subcellular location is the chloroplast thylakoid membrane. It catalyses the reaction a plastoquinone + NADH + (n+1) H(+)(in) = a plastoquinol + NAD(+) + n H(+)(out). The enzyme catalyses a plastoquinone + NADPH + (n+1) H(+)(in) = a plastoquinol + NADP(+) + n H(+)(out). Functionally, NDH shuttles electrons from NAD(P)H:plastoquinone, via FMN and iron-sulfur (Fe-S) centers, to quinones in the photosynthetic chain and possibly in a chloroplast respiratory chain. The immediate electron acceptor for the enzyme in this species is believed to be plastoquinone. Couples the redox reaction to proton translocation, and thus conserves the redox energy in a proton gradient. This Chlorokybus atmophyticus (Soil alga) protein is NAD(P)H-quinone oxidoreductase subunit 1, chloroplastic.